Reading from the N-terminus, the 175-residue chain is ATP synthase subunit b, chloroplastic (175 aa).

Residues 22–42 (VFETNIINLAAVVGIVVSFVG) traverse the membrane as a helical segment.

Belongs to the ATPase B chain family. In terms of assembly, F-type ATPases have 2 components, F(1) - the catalytic core - and F(0) - the membrane proton channel. F(1) has five subunits: alpha(3), beta(3), gamma(1), delta(1), epsilon(1). F(0) has four main subunits: a(1), b(1), b'(1) and c(10-14). The alpha and beta chains form an alternating ring which encloses part of the gamma chain. F(1) is attached to F(0) by a central stalk formed by the gamma and epsilon chains, while a peripheral stalk is formed by the delta, b and b' chains.

It is found in the plastid. The protein localises to the chloroplast thylakoid membrane. Its function is as follows. F(1)F(0) ATP synthase produces ATP from ADP in the presence of a proton or sodium gradient. F-type ATPases consist of two structural domains, F(1) containing the extramembraneous catalytic core and F(0) containing the membrane proton channel, linked together by a central stalk and a peripheral stalk. During catalysis, ATP synthesis in the catalytic domain of F(1) is coupled via a rotary mechanism of the central stalk subunits to proton translocation. Functionally, component of the F(0) channel, it forms part of the peripheral stalk, linking F(1) to F(0). The polypeptide is ATP synthase subunit b, chloroplastic (Chlamydomonas reinhardtii (Chlamydomonas smithii)).